We begin with the raw amino-acid sequence, 787 residues long: GPI ethanolamine phosphate transferase 2 (787 aa).

N-linked (GlcNAc...) asparagine glycosylation is found at Asn-33, Asn-185, and Asn-397. 3 consecutive transmembrane segments (helical) span residues 400 to 420, 426 to 446, and 455 to 475; these read FLTY…VWNF, YIEH…SSFI, and WITI…LVVL. The N-linked (GlcNAc...) asparagine glycan is linked to Asn-485. Helical transmembrane passes span 504 to 524 and 536 to 556; these read HTSV…FPFL and LLSV…FAIV. An N-linked (GlcNAc...) asparagine glycan is attached at Asn-581. A helical membrane pass occupies residues 591 to 611; it reads LVPIARIFFQICGVSIIILLF. Asn-617 is a glycosylation site (N-linked (GlcNAc...) asparagine). A helical transmembrane segment spans residues 629–651; it reads VIKFVLLLQTSSANIPLFLIFEI. Asn-669 carries an N-linked (GlcNAc...) asparagine glycan. 4 helical membrane-spanning segments follow: residues 671 to 693, 699 to 719, 740 to 760, and 767 to 787; these read TFFQ…YNGV, IYVV…YWAL, GTCL…WSVF, and YAAW…LGVL.

The protein belongs to the PIGG/PIGN/PIGO family. PIGG subfamily.

The protein resides in the endoplasmic reticulum membrane. The protein operates within glycolipid biosynthesis; glycosylphosphatidylinositol-anchor biosynthesis. Its function is as follows. Ethanolamine phosphate transferase involved in glycosylphosphatidylinositol-anchor biosynthesis. Transfers ethanolamine phosphate to the GPI second mannose. The polypeptide is GPI ethanolamine phosphate transferase 2 (LAS21) (Kluyveromyces lactis (strain ATCC 8585 / CBS 2359 / DSM 70799 / NBRC 1267 / NRRL Y-1140 / WM37) (Yeast)).